Here is a 575-residue protein sequence, read N- to C-terminus: Transmembrane protein 108 (575 aa).

Residues 9-29 form a helical membrane-spanning segment; that stretch reads YCQLLSFLLILALTEALAFAI. The segment at 31-169 is interaction with SH3GL2; the sequence is EPSPRESLQV…TTTRRPPRPP (139 aa). Residues 65-398 form a disordered region; the sequence is MLTPNPDGPP…PSRVSESTIS (334 aa). A compositionally biased stretch (low complexity) spans 74–87; it reads PSQAAAPMATPTPR. Residues 95 to 115 show a composition bias toward polar residues; sequence HTISTIAATVTAPHSESSLST. The segment covering 146-160 has biased composition (low complexity); the sequence is PPGATSRPTTAPPRT. The tract at residues 173–407 is interaction with DST (isoform 1); sequence RKGAGNSSRP…SGAKEETVAT (235 aa). Residues 244-271 are compositionally biased toward polar residues; the sequence is YSSSPQPQTVAATTVPSNTSWAPTTTSL. Over residues 290–318 the composition is skewed to low complexity; sequence TFTSQGGTPDATAASGAPVSPQAAPVPSQ. Over residues 329-352 the composition is skewed to polar residues; it reads PSHSDSWLTVTPGTSRPLSTSSGV. The segment covering 353-366 has biased composition (low complexity); it reads FTAATGPTPAAFDT. The span at 367-398 shows a compositional bias: polar residues; it reads SVSAPSQGIPQGASTTPQAPTHPSRVSESTIS. Residues 469 to 489 traverse the membrane as a helical segment; that stretch reads IAWVILAISVPISSCSVLLTV. Residues 490-575 form an interaction with CYFIP2 region; the sequence is CCMKRKKKTA…FVGNDQVSEI (86 aa).

In terms of assembly, interacts with DST (isoform 1). Interacts with SH3GL2. Interacts (via N-terminus) with CYFIP1 and CYFIP2; the interactions associate TMEM108 with the WAVE1 complex. Post-translationally, glycosylated.

It localises to the membrane. It is found in the postsynaptic density. The protein resides in the endosome membrane. Its subcellular location is the cell projection. The protein localises to the axon. It localises to the dendrite. It is found in the early endosome. Transmembrane protein required for proper cognitive functions. Involved in the development of dentate gyrus (DG) neuron circuitry, is necessary for AMPA receptors surface expression and proper excitatory postsynaptic currents of DG granule neurons. Regulates the organization and stability of the microtubule network of sensory neurons to allow axonal transport. Through the interaction with DST, mediates the docking of the dynein/dynactin motor complex to vesicle cargos for retrograde axonal transport. In hippocampal neurons, required for BDNF-dependent dendrite outgrowth. Cooperates with SH3GL2 and recruits the WAVE1 complex to facilitate actin-dependent BDNF:NTRK2 early endocytic trafficking and mediate signaling from early endosomes. This Homo sapiens (Human) protein is Transmembrane protein 108.